Here is a 536-residue protein sequence, read N- to C-terminus: Probable tyrosyl-DNA phosphodiesterase (536 aa).

The active-site Nucleophile is His122. Lys124 contributes to the substrate binding site. Residues 315–318 (SMGS) form an interaction with DNA region. His401 serves as the catalytic Proton donor/acceptor. Lys403 lines the substrate pocket.

This sequence belongs to the tyrosyl-DNA phosphodiesterase family.

It localises to the nucleus. Its function is as follows. DNA repair enzyme that can remove a variety of covalent adducts from DNA through hydrolysis of a 3'-phosphodiester bond, giving rise to DNA with a free 3' phosphate. Catalyzes the hydrolysis of dead-end complexes between DNA and the topoisomerase I active site tyrosine residue. Hydrolyzes 3'-phosphoglycolates on protruding 3' ends on DNA double-strand breaks due to DNA damage by radiation and free radicals. Acts on blunt-ended double-strand DNA breaks and on single-stranded DNA. May have low 3'exonuclease activity and may be able to remove a single nucleoside from the 3'end of DNA and RNA molecules with 3'hydroxyl groups. Has no exonuclease activity towards DNA or RNA with a 3'phosphate. This chain is Probable tyrosyl-DNA phosphodiesterase, found in Schizosaccharomyces pombe (strain 972 / ATCC 24843) (Fission yeast).